We begin with the raw amino-acid sequence, 249 residues long: 5'-nucleotidase SurE (249 aa).

Aspartate 8, aspartate 9, serine 39, and asparagine 91 together coordinate a divalent metal cation.

The protein belongs to the SurE nucleotidase family. A divalent metal cation is required as a cofactor.

It is found in the cytoplasm. It carries out the reaction a ribonucleoside 5'-phosphate + H2O = a ribonucleoside + phosphate. Nucleotidase that shows phosphatase activity on nucleoside 5'-monophosphates. The polypeptide is 5'-nucleotidase SurE (Pseudomonas savastanoi pv. phaseolicola (strain 1448A / Race 6) (Pseudomonas syringae pv. phaseolicola (strain 1448A / Race 6))).